The sequence spans 211 residues: Probable nicotinate-nucleotide adenylyltransferase (211 aa).

This sequence belongs to the NadD family.

It catalyses the reaction nicotinate beta-D-ribonucleotide + ATP + H(+) = deamido-NAD(+) + diphosphate. It participates in cofactor biosynthesis; NAD(+) biosynthesis; deamido-NAD(+) from nicotinate D-ribonucleotide: step 1/1. In terms of biological role, catalyzes the reversible adenylation of nicotinate mononucleotide (NaMN) to nicotinic acid adenine dinucleotide (NaAD). The polypeptide is Probable nicotinate-nucleotide adenylyltransferase (Thermoanaerobacter sp. (strain X514)).